Reading from the N-terminus, the 168-residue chain is Phosphopantetheine adenylyltransferase (168 aa).

Thr-14 contributes to the substrate binding site. ATP-binding positions include 14–15 (TF) and His-22. Substrate-binding residues include Lys-46, Leu-78, and Arg-92. ATP-binding positions include 93–95 (GLR), Glu-103, and 128–134 (YSFISSS).

The protein belongs to the bacterial CoaD family. In terms of assembly, homohexamer. The cofactor is Mg(2+).

The protein resides in the cytoplasm. It catalyses the reaction (R)-4'-phosphopantetheine + ATP + H(+) = 3'-dephospho-CoA + diphosphate. The protein operates within cofactor biosynthesis; coenzyme A biosynthesis; CoA from (R)-pantothenate: step 4/5. Reversibly transfers an adenylyl group from ATP to 4'-phosphopantetheine, yielding dephospho-CoA (dPCoA) and pyrophosphate. The chain is Phosphopantetheine adenylyltransferase from Xanthomonas axonopodis pv. citri (strain 306).